Reading from the N-terminus, the 535-residue chain is Putative subtilisin-like proteinase 2 (535 aa).

A signal peptide spans 1–17 (MFFVGVAVLAALQSVWG). Residues 221-475 (NWIFRVLQIK…IPRLGCKGRI (255 aa)) form the Peptidase S8 domain. Active-site charge relay system residues include Asp-255 and His-277. Cys-369 and Cys-400 are disulfide-bonded. Ser-420 acts as the Charge relay system in catalysis. Residues 489–509 (IVPLVFVVLITSALLYLLLIG) form a helical membrane-spanning segment.

This sequence belongs to the peptidase S8 family.

It is found in the membrane. In terms of biological role, may be involved in the degradation of proteins for nutrient acquisition or possess a regulatory function by proteolytic activation of proproteins. This chain is Putative subtilisin-like proteinase 2 (SPL2), found in Encephalitozoon cuniculi (strain GB-M1) (Microsporidian parasite).